A 114-amino-acid chain; its full sequence is Ghrelin (114 aa).

An N-terminal signal peptide occupies residues 1 to 24 (MNFGKAAIFGVVLFCLLWTEGAQA). The O-decanoyl threonine; alternate moiety is linked to residue Thr27. The O-octanoyl threonine; alternate moiety is linked to residue Thr27. Positions 55–114 (GVEDDLAGEEIGVTFPLDMKMTQEQFQKQRAAVQDFLYSSLLSLGSVQDTEDKNENPQSQ) are cleaved as a propeptide — removed in mature form.

Belongs to the motilin family. O-octanoylated by GOAT/MBOAT4. O-octanoylation or O-decanoylation is essential for activity. The O-decanoylated form ghrelin-27-C10 differs in the length of the carbon backbone of the carboxylic acid bound to Thr-27. 33% of frog ghrelin is O-decanoylated. Post-translationally, 80% of frog ghrelin has Asn-52 cleaved from its C-terminus giving rise to ghrelin-27. In terms of tissue distribution, high levels in stomach. Moderate levels in small intestine, pancreas and testis. Low levels in heart, lung and gall bladder.

The protein localises to the secreted. Ligand for growth hormone secretagogue receptor type 1 (GHSR). Induces the release of growth hormone from the pituitary. Has an appetite-stimulating effect, induces adiposity and stimulates gastric acid secretion. Involved in growth regulation. This chain is Ghrelin (GHRL), found in Aquarana catesbeiana (American bullfrog).